A 330-amino-acid chain; its full sequence is Mycothiol acetyltransferase (330 aa).

2 consecutive N-acetyltransferase domains span residues 5-142 and 171-328; these read LVTD…MPLR and VRLR…APRP. Glu36 lines the 1D-myo-inositol 2-(L-cysteinylamino)-2-deoxy-alpha-D-glucopyranoside pocket. Acetyl-CoA is bound at residue 80-82; sequence VVV. The disordered stretch occupies residues 142 to 161; that stretch reads RDIAGDEPGGPWEAPELPEP. Positions 198, 238, and 254 each coordinate 1D-myo-inositol 2-(L-cysteinylamino)-2-deoxy-alpha-D-glucopyranoside. Acetyl-CoA-binding positions include 258 to 260 and 265 to 271; these read VGV and QGSGLGR. Tyr292 is a 1D-myo-inositol 2-(L-cysteinylamino)-2-deoxy-alpha-D-glucopyranoside binding site. Acetyl-CoA is bound at residue 297 to 302; that stretch reads NEAAVR.

It belongs to the acetyltransferase family. MshD subfamily. In terms of assembly, monomer.

It catalyses the reaction 1D-myo-inositol 2-(L-cysteinylamino)-2-deoxy-alpha-D-glucopyranoside + acetyl-CoA = mycothiol + CoA + H(+). Catalyzes the transfer of acetyl from acetyl-CoA to desacetylmycothiol (Cys-GlcN-Ins) to form mycothiol. This Nocardiopsis dassonvillei (strain ATCC 23218 / DSM 43111 / CIP 107115 / JCM 7437 / KCTC 9190 / NBRC 14626 / NCTC 10488 / NRRL B-5397 / IMRU 509) (Actinomadura dassonvillei) protein is Mycothiol acetyltransferase.